The primary structure comprises 226 residues: PKHD-type hydroxylase LHK_00496 (226 aa).

Positions 78 to 178 (RFFPPLFNRY…RVASFMWIQS (101 aa)) constitute a Fe2OG dioxygenase domain. 3 residues coordinate Fe cation: His96, Asp98, and His159. 2-oxoglutarate is bound at residue Arg169.

Fe(2+) is required as a cofactor. It depends on L-ascorbate as a cofactor.

The polypeptide is PKHD-type hydroxylase LHK_00496 (Laribacter hongkongensis (strain HLHK9)).